Here is a 246-residue protein sequence, read N- to C-terminus: Probable transcriptional regulatory protein CLK_2466 (246 aa).

The protein belongs to the TACO1 family.

It is found in the cytoplasm. The protein is Probable transcriptional regulatory protein CLK_2466 of Clostridium botulinum (strain Loch Maree / Type A3).